The following is a 636-amino-acid chain: 1,4-alpha-glucan branching enzyme GlgB (636 aa).

The active-site Nucleophile is aspartate 309. Catalysis depends on glutamate 362, which acts as the Proton donor.

The protein belongs to the glycosyl hydrolase 13 family. GlgB subfamily. Monomer.

The catalysed reaction is Transfers a segment of a (1-&gt;4)-alpha-D-glucan chain to a primary hydroxy group in a similar glucan chain.. The protein operates within glycan biosynthesis; glycogen biosynthesis. Functionally, catalyzes the formation of the alpha-1,6-glucosidic linkages in glycogen by scission of a 1,4-alpha-linked oligosaccharide from growing alpha-1,4-glucan chains and the subsequent attachment of the oligosaccharide to the alpha-1,6 position. The protein is 1,4-alpha-glucan branching enzyme GlgB of Aromatoleum aromaticum (strain DSM 19018 / LMG 30748 / EbN1) (Azoarcus sp. (strain EbN1)).